Consider the following 156-residue polypeptide: MIICSVDIGIKNPAYAIFNYDNTSNTIKLIAIEKSDWTKNWERSVARDLTRYNPDVVILEKQGFKSPNSKIIYFIKGFFYNSNTKVIVRNPTFKGGSYRNRKKQSIDVFIQKISEYTDYKNDILNKYTKLDDIADSFNLGLSYMESLLKKCKISKD.

Belongs to the RuvC family. Poxviruses-type subfamily. The cofactor is Mg(2+).

Nuclease that specifically cleaves and resolves four-way DNA Holliday junctions into linear duplex products. The chain is Holliday junction resolvase from Vertebrata (FPV).